The sequence spans 156 residues: Large ribosomal subunit protein uL15 (156 aa).

Residues 25 to 48 (RGIGCGKGKTSGRGHKGQKARSGV) are disordered. Positions 34 to 43 (TSGRGHKGQK) are enriched in basic residues.

The protein belongs to the universal ribosomal protein uL15 family. As to quaternary structure, part of the 50S ribosomal subunit.

Its function is as follows. Binds to the 23S rRNA. This is Large ribosomal subunit protein uL15 from Wolbachia pipientis subsp. Culex pipiens (strain wPip).